A 1032-amino-acid polypeptide reads, in one-letter code: Argonaute protein hrde-1 (1032 aa).

2 disordered regions span residues 1–51 and 298–375; these read MADL…PIGR and KLSE…YSPS. Positions 1–551 are required to recruit the small-RNA amplification machinery to gene targets and promote gene silencing; that stretch reads MADLLDKIMG…IQMTAKLLPP (551 aa). Positions 18 to 33 are enriched in basic and acidic residues; it reads PKRDNRMNQDKDEPTS. Residues 303-313 are compositionally biased toward gly residues; sequence KGGGGGRGGYG. Composition is skewed to basic and acidic residues over residues 315–335 and 343–364; these read SDSR…RDFR and GNDR…RRDS. The PAZ domain occupies 376 to 481; sequence DAAELEHAFG…FPMELLRIAP (106 aa). One can recognise a Piwi domain in the interval 650–977; the sequence is DILVGIAREK…LAKRGRNNYK (328 aa).

The protein belongs to the argonaute family. WAGO subfamily. As to expression, expressed in the nuclei of male and female germ cells.

It localises to the cytoplasm. Its subcellular location is the cytoplasmic ribonucleoprotein granule. It is found in the nucleus. Functionally, argonaute protein which is involved in the endogenous small interfering RNA (endo-siRNA) pathway and is required for RNA-mediated gene silencing (RNAi) in the germline. Interacts with secondary 22G-RNAs in an hrde-2-dependent manner; 22G-RNAs are RNA-dependent RNA polymerase-derived endo-siRNAs, typically 22 nucleotides in length with a 5'-guanosine residue. Plays a key role in transgenerational epigenetic inheritance and germline immortality. May be involved in transgenerational gene silencing both by inducing subnuclear-co-localization of target genes into heterochromatin and by activation of small RNA amplification in the nuage. The polypeptide is Argonaute protein hrde-1 (Caenorhabditis elegans).